A 154-amino-acid chain; its full sequence is Small ribosomal subunit protein uS7 (154 aa).

This sequence belongs to the universal ribosomal protein uS7 family.

The protein is Small ribosomal subunit protein uS7 (RPS5) of Nicotiana plumbaginifolia (Leadwort-leaved tobacco).